The chain runs to 1504 residues: MATARTFGPEREAEPAKEARVVGSELVDTYTVYIIQVTDGSHEWTVKHRYSDFHDLHEKLVAERKIDKNLLPPKKIIGKNSRSLVEKREKDLEVYLQKLLAAFPGVTPRVLAHFLHFHFYEINGITAALAEELFEKGEQLLGAGEVFAIGPLQLYAVTEQLQQGKPTCASGDAKTDLGHILDFTCRLKYLKVSGTEGPFGTSNIQEQLLPFDLSIFKSLHQVEISHCDAKHIRGLVASKPTLATLSVRFSATSMKEVLVPEASEFDEWEPEGTTLEGPVTAVIPTWQALTTLDLSHNSVSEIDESVKLIPKIEFLDLSHNGLLVVDNLQHLYNLVHLDLSYNKLSSLEGLHTKLGNIKTLNLAGNLLESLSGLHKLYSLVNLDLRDNRIEQMEEVRSIGSLPCLEHVSLLNNPLSIIPDYRTKVLAQFGERASEVCLDDTVTTEKELDTVEVLKAIQKAKEVKSKLSNPEKKGGEDSRLSAAPCIRPSSSPPTVAPASASLPQPILSNQGIMFVQEEALASSLSSTDSLTPEHQPIAQGCSDSLESIPAGQAASDDLRDVPGAVGGASPEHAEPEVQVVPGSGQIIFLPFTCIGYTATNQDFIQRLSTLIRQAIERQLPAWIEAANQREEGQGEQGEEEDEEEEEEEDVAENRYFEMGPPDVEEEEGGGQGEEEEEEEEDEEAEEERLALEWALGADEDFLLEHIRILKVLWCFLIHVQGSIRQFAACLVLTDFGIAVFEIPHQESRGSSQHILSSLRFVFCFPHGDLTEFGFLMPELCLVLKVRHSENTLFIISDAANLHEFHADLRSCFAPQHMAMLCSPILYGSHTSLQEFLRQLLTFYKVAGGCQERSQGCFPVYLVYSDKRMVQTAAGDYSGNIEWASCTLCSAVRRSCCAPSEAVKSAAIPYWLLLTPQHLNVIKADFNPMPNRGTHNCRNRNSFKLSRVPLSTVLLDPTRSCTQPRGAFADGHVLELLVGYRFVTAIFVLPHEKFHFLRVYNQLRASLQDLKTVVIAKTPGTGGSPQGSFADGQPAERRASNDQRPQEVPAEALAPAPAEVPAPAPAAASASGPAKTPAPAEASTSALVPEETPVEAPAPPPAEAPAQYPSEHLIQATSEENQIPSHLPACPSLRHVASLRGSAIIELFHSSIAEVENEELRHLMWSSVVFYQTPGLEVTACVLLSTKAVYFVLHDGLRRYFSEPLQDFWHQKNTDYNNSPFHISQCFVLKLSDLQSVNVGLFDQHFRLTGSTPMQVVTCLTRDSYLTHCFLQHLMVVLSSLERTPSPEPVDKDFYSEFGNKTTGKMENYELIHSSRVKFTYPSEEEIGDLTFTVAQKMAEPEKAPALSILLYVQAFQVGMPPPGCCRGPLRPKTLLLTSSEIFLLDEDCVHYPLPEFAKEPPQRDRYRLDDGRRVRDLDRVLMGYQTYPQALTLVFDDVQGHDLMGSVTLDHFGEVPGGPARASQGREVQWQVFVPSAESREKLISLLARQWEALCGRELPVELTG.

The residue at position 2 (Ala-2) is an N-acetylalanine. The interval 2-133 is necessary for binding to phosphoinositide-3-P; not sufficient for targeting to endosomes; it reads ATARTFGPER…GITAALAEEL (132 aa). A PX domain is found at 11–121; sequence REAEPAKEAR…AHFLHFHFYE (111 aa). The segment at 120 to 695 is necessary for homooligomerization and targeting to endosomes; it reads YEINGITAAL…ERLALEWALG (576 aa). Residues 245–869 are interaction with PAK1; it reads LSVRFSATSM…LVYSDKRMVQ (625 aa). LRR repeat units follow at residues 288–309, 311–332, 333–354, 356–377, 378–399, and 403–424; these read ALTT…VKLI, KIEF…QHLY, NLVH…HTKL, NIKT…HKLY, SLVN…RSIG, and CLEH…RTKV. The segment covering 463-478 has biased composition (basic and acidic residues); sequence KSKLSNPEKKGGEDSR. Disordered regions lie at residues 463–501, 524–547, 554–573, and 628–687; these read KSKL…SASL, SSTD…LESI, SDDL…EHAE, and REEG…EEER. Phosphoserine occurs at positions 541, 543, and 546. A coiled-coil region spans residues 634–695; that stretch reads EQGEEEDEEE…ERLALEWALG (62 aa). Composition is skewed to acidic residues over residues 635–649 and 661–685; these read QGEE…EEDV and DVEE…EAEE. Residues 660–869 form an interaction with LIMK region; that stretch reads PDVEEEEGGG…LVYSDKRMVQ (210 aa). Positions 709-807 are interaction with ITGA5; sequence KVLWCFLIHV…ANLHEFHADL (99 aa). Residues 1016–1104 are disordered; it reads TPGTGGSPQG…PAPPPAEAPA (89 aa). Ser-1022 bears the Phosphoserine mark. Basic and acidic residues predominate over residues 1032 to 1043; the sequence is PAERRASNDQRP. The segment covering 1063–1078 has biased composition (low complexity); that stretch reads PAAASASGPAKTPAPA. Phosphothreonine is present on Thr-1282. Ser-1284 carries the post-translational modification Phosphoserine.

In terms of assembly, homooligomer. Interacts with GRB2. Interacts with PIK3R1; probably associates with the PI3-kinase complex. Interacts with IRS4. Found in a complex with ITGA5 and PAK1. Found in a complex with LIMK1 and PAK1. Interacts with ITGA5 (via cytoplasmic domain); this interaction is direct. Interacts with PAK1 (via kinase domain); this interaction is direct and is increased upon activation of PAK1. Interacts with LIMK1 (via PDZ and kinase domain); this interaction is direct. Interacts with LIMK2; this interaction depends on LIMK2 activity. Interacts with RAC1 (activated state). Interacts with STK11; this interaction may increase STK11 activity. Isoform 1, isoform 3 and isoform 4 are expressed in brain. Isoform 1 is expressed in endocrine tissues.

It localises to the cell membrane. The protein resides in the cytoplasm. It is found in the early endosome. The protein localises to the recycling endosome. Acts either as the functional imidazoline-1 receptor (I1R) candidate or as a membrane-associated mediator of the I1R signaling. Binds numerous imidazoline ligands that induces initiation of cell-signaling cascades triggering to cell survival, growth and migration. Its activation by the agonist rilmenidine induces an increase in phosphorylation of mitogen-activated protein kinases MAPK1 and MAPK3 in rostral ventrolateral medulla (RVLM) neurons that exhibited rilmenidine-evoked hypotension. Blocking its activation with efaroxan abolished rilmenidine-induced mitogen-activated protein kinase phosphorylation in RVLM neurons. Acts as a modulator of Rac-regulated signal transduction pathways. Suppresses Rac1-stimulated cell migration by interacting with PAK1 and inhibiting its kinase activity. Also blocks Pak-independent Rac signaling by interacting with RAC1 and inhibiting Rac1-stimulated NF-kB response element and cyclin D1 promoter activation. Also inhibits LIMK1 kinase activity by reducing LIMK1 'Tyr-508' phosphorylation. Inhibits Rac-induced cell migration and invasion in breast and colon epithelial cells. Inhibits lamellipodia formation, when overexpressed. Plays a role in protection against apoptosis. Involved in association with IRS4 in the enhancement of insulin activation of MAPK1 and MAPK3. When overexpressed, induces a redistribution of cell surface ITGA5 integrin to intracellular endosomal structures. This is Nischarin (NISCH) from Homo sapiens (Human).